We begin with the raw amino-acid sequence, 146 residues long: Hemoglobin subunit beta (146 aa).

The Globin domain maps to 2–146 (HWSAEEKQLI…VAHALARKYH (145 aa)). Positions 63 and 92 each coordinate heme b.

This sequence belongs to the globin family. Heterotetramer of two alpha chains and two beta chains. As to expression, red blood cells.

Involved in oxygen transport from the lung to the various peripheral tissues. The chain is Hemoglobin subunit beta (HBB) from Stercorarius maccormicki (South polar skua).